We begin with the raw amino-acid sequence, 156 residues long: NAD(P)H-quinone oxidoreductase subunit N (156 aa).

Belongs to the complex I NdhN subunit family. In terms of assembly, NDH-1 can be composed of about 15 different subunits; different subcomplexes with different compositions have been identified which probably have different functions.

Its subcellular location is the cellular thylakoid membrane. It carries out the reaction a plastoquinone + NADH + (n+1) H(+)(in) = a plastoquinol + NAD(+) + n H(+)(out). The catalysed reaction is a plastoquinone + NADPH + (n+1) H(+)(in) = a plastoquinol + NADP(+) + n H(+)(out). NDH-1 shuttles electrons from an unknown electron donor, via FMN and iron-sulfur (Fe-S) centers, to quinones in the respiratory and/or the photosynthetic chain. The immediate electron acceptor for the enzyme in this species is believed to be plastoquinone. Couples the redox reaction to proton translocation, and thus conserves the redox energy in a proton gradient. Cyanobacterial NDH-1 also plays a role in inorganic carbon-concentration. In Prochlorococcus marinus (strain MIT 9515), this protein is NAD(P)H-quinone oxidoreductase subunit N.